A 141-amino-acid chain; its full sequence is Large ribosomal subunit protein mL42 (141 aa).

The N-terminal 31 residues, 1 to 31 (MTAAVKWAVSHRTIWRHLFPIQNGAISSACH), are a transit peptide targeting the mitochondrion.

This sequence belongs to the mitochondrion-specific ribosomal protein mL42 family. In terms of assembly, component of the mitochondrial ribosome large subunit (39S) which comprises a 16S rRNA and about 50 distinct proteins. Component of the mitochondrial ribosome small subunit (28S) which comprises a 12S rRNA and about 30 distinct proteins.

The protein localises to the mitochondrion. The polypeptide is Large ribosomal subunit protein mL42 (Mrpl42) (Rattus norvegicus (Rat)).